Here is an 84-residue protein sequence, read N- to C-terminus: Toxin To5 (84 aa).

Positions 1-19 (MKAIIFFIGCLMLIDLVAG) are cleaved as a signal peptide. The 62-residue stretch at 21–82 (RSGYPVTQKG…IWGSYPNNCG (62 aa)) folds into the LCN-type CS-alpha/beta domain. Disulfide bonds link Cys-31-Cys-81, Cys-35-Cys-57, Cys-43-Cys-62, and Cys-47-Cys-64. Residue Cys-81 is modified to Cysteine amide.

In terms of tissue distribution, expressed by the venom gland.

Its subcellular location is the secreted. Beta toxins bind voltage-independently at site-4 of sodium channels (Nav) and shift the voltage of activation toward more negative potentials thereby affecting sodium channel activation and promoting spontaneous and repetitive firing. This is Toxin To5 from Tityus obscurus (Amazonian scorpion).